We begin with the raw amino-acid sequence, 468 residues long: Siroheme synthase (468 aa).

The tract at residues 1 to 203 (MQYLPIFLNI…GQEEEAEGAL (203 aa)) is precorrin-2 dehydrogenase /sirohydrochlorin ferrochelatase. NAD(+) is bound by residues 22–23 (TV) and 43–44 (PK). Position 128 is a phosphoserine (serine 128). The segment at 216–468 (GEVYLVGAGP…VPDREPLDAR (253 aa)) is uroporphyrinogen-III C-methyltransferase. Proline 225 contacts S-adenosyl-L-methionine. Aspartate 248 functions as the Proton acceptor in the catalytic mechanism. Lysine 270 (proton donor) is an active-site residue. S-adenosyl-L-methionine-binding positions include 301 to 303 (GGD), isoleucine 306, 331 to 332 (TA), methionine 383, and glycine 412.

In the N-terminal section; belongs to the precorrin-2 dehydrogenase / sirohydrochlorin ferrochelatase family. The protein in the C-terminal section; belongs to the precorrin methyltransferase family.

It catalyses the reaction uroporphyrinogen III + 2 S-adenosyl-L-methionine = precorrin-2 + 2 S-adenosyl-L-homocysteine + H(+). The catalysed reaction is precorrin-2 + NAD(+) = sirohydrochlorin + NADH + 2 H(+). It carries out the reaction siroheme + 2 H(+) = sirohydrochlorin + Fe(2+). It participates in cofactor biosynthesis; adenosylcobalamin biosynthesis; precorrin-2 from uroporphyrinogen III: step 1/1. It functions in the pathway cofactor biosynthesis; adenosylcobalamin biosynthesis; sirohydrochlorin from precorrin-2: step 1/1. Its pathway is porphyrin-containing compound metabolism; siroheme biosynthesis; precorrin-2 from uroporphyrinogen III: step 1/1. The protein operates within porphyrin-containing compound metabolism; siroheme biosynthesis; siroheme from sirohydrochlorin: step 1/1. It participates in porphyrin-containing compound metabolism; siroheme biosynthesis; sirohydrochlorin from precorrin-2: step 1/1. Functionally, multifunctional enzyme that catalyzes the SAM-dependent methylations of uroporphyrinogen III at position C-2 and C-7 to form precorrin-2 via precorrin-1. Then it catalyzes the NAD-dependent ring dehydrogenation of precorrin-2 to yield sirohydrochlorin. Finally, it catalyzes the ferrochelation of sirohydrochlorin to yield siroheme. In Nitrosococcus oceani (strain ATCC 19707 / BCRC 17464 / JCM 30415 / NCIMB 11848 / C-107), this protein is Siroheme synthase.